The following is a 138-amino-acid chain: MRILGLDLGSKTIGVAVSDPLGFTAQGLTTVRRTNKEKDIAEIKKFCDEYDAKVIVIGLPKNMNGTIGPSGEIAMAFGKVIEEELNVEVKFWDERLTTVAAHKAMLEADLSRNKRKKIVDKVASTYILQGYLDMISRK.

The protein belongs to the YqgF nuclease family.

The protein resides in the cytoplasm. In terms of biological role, could be a nuclease involved in processing of the 5'-end of pre-16S rRNA. This is Putative pre-16S rRNA nuclease from Clostridium beijerinckii (strain ATCC 51743 / NCIMB 8052) (Clostridium acetobutylicum).